A 346-amino-acid polypeptide reads, in one-letter code: Aspartate-semialdehyde dehydrogenase (346 aa).

NADP(+) contacts are provided by residues 13–16 and 41–42; these read TGAV and RS. Position 98 is a phosphoserine (Ser98). Arg101 contributes to the phosphate binding site. Cys130 acts as the Acyl-thioester intermediate in catalysis. Phosphotyrosine is present on Tyr146. Gln157 is a substrate binding site. Residue 160-161 coordinates NADP(+); sequence SG. Position 221 (Lys221) interacts with phosphate. Arg243 serves as a coordination point for substrate. The active-site Proton acceptor is the His250. Asn324 contacts NADP(+).

The protein belongs to the aspartate-semialdehyde dehydrogenase family. In terms of assembly, homodimer.

The catalysed reaction is L-aspartate 4-semialdehyde + phosphate + NADP(+) = 4-phospho-L-aspartate + NADPH + H(+). It functions in the pathway amino-acid biosynthesis; L-lysine biosynthesis via DAP pathway; (S)-tetrahydrodipicolinate from L-aspartate: step 2/4. The protein operates within amino-acid biosynthesis; L-methionine biosynthesis via de novo pathway; L-homoserine from L-aspartate: step 2/3. Its pathway is amino-acid biosynthesis; L-threonine biosynthesis; L-threonine from L-aspartate: step 2/5. Catalyzes the NADPH-dependent formation of L-aspartate-semialdehyde (L-ASA) by the reductive dephosphorylation of L-aspartyl-4-phosphate. This chain is Aspartate-semialdehyde dehydrogenase, found in Bacillus subtilis (strain 168).